Reading from the N-terminus, the 282-residue chain is MNDRLFISALRLLPKNALSRAVGALTRWRAPVPVRLAAMRAFARRYGIDLSECPDLDVYRTFGEFFARPLRPGLRPIAPGERVVASPVDGAVSETGRVEAGRLVQAKGIDYPAAALLGDEALAARFAGGAYATLYLAPKDYHRIHFPLGGKVTGWRYVPGKLWPVNPASVRTVRGLFALNERLVTVLETPLGACAVVAVGATVVGRVCAYYDPSIPFTNLPGAAPRRHDYETPIPVEKGQELGAFEMGSTVILLFEPGKARLDPRLAPGVRVRVGEPLGGAA.

Catalysis depends on charge relay system; for autoendoproteolytic cleavage activity residues aspartate 89, histidine 145, and serine 249. The Schiff-base intermediate with substrate; via pyruvic acid; for decarboxylase activity role is filled by serine 249. Residue serine 249 is modified to Pyruvic acid (Ser); by autocatalysis.

It belongs to the phosphatidylserine decarboxylase family. PSD-B subfamily. Prokaryotic type I sub-subfamily. As to quaternary structure, heterodimer of a large membrane-associated beta subunit and a small pyruvoyl-containing alpha subunit. The cofactor is pyruvate. Post-translationally, is synthesized initially as an inactive proenzyme. Formation of the active enzyme involves a self-maturation process in which the active site pyruvoyl group is generated from an internal serine residue via an autocatalytic post-translational modification. Two non-identical subunits are generated from the proenzyme in this reaction, and the pyruvate is formed at the N-terminus of the alpha chain, which is derived from the carboxyl end of the proenzyme. The autoendoproteolytic cleavage occurs by a canonical serine protease mechanism, in which the side chain hydroxyl group of the serine supplies its oxygen atom to form the C-terminus of the beta chain, while the remainder of the serine residue undergoes an oxidative deamination to produce ammonia and the pyruvoyl prosthetic group on the alpha chain. During this reaction, the Ser that is part of the protease active site of the proenzyme becomes the pyruvoyl prosthetic group, which constitutes an essential element of the active site of the mature decarboxylase.

Its subcellular location is the cell membrane. It carries out the reaction a 1,2-diacyl-sn-glycero-3-phospho-L-serine + H(+) = a 1,2-diacyl-sn-glycero-3-phosphoethanolamine + CO2. Its pathway is phospholipid metabolism; phosphatidylethanolamine biosynthesis; phosphatidylethanolamine from CDP-diacylglycerol: step 2/2. In terms of biological role, catalyzes the formation of phosphatidylethanolamine (PtdEtn) from phosphatidylserine (PtdSer). The chain is Phosphatidylserine decarboxylase proenzyme from Anaeromyxobacter sp. (strain K).